Here is a 147-residue protein sequence, read N- to C-terminus: Transcriptional regulator MraZ (147 aa).

SpoVT-AbrB domains are found at residues 6-48 and 77-120; these read NFER…NSEE and TVEV…SKAK.

It belongs to the MraZ family. Forms oligomers.

It localises to the cytoplasm. Its subcellular location is the nucleoid. The polypeptide is Transcriptional regulator MraZ (Mycoplasmopsis pulmonis (strain UAB CTIP) (Mycoplasma pulmonis)).